Consider the following 464-residue polypeptide: GTPase Der (464 aa).

EngA-type G domains follow at residues 3 to 166 (ALVA…PVLE) and 177 to 350 (LQFA…QSAN). GTP-binding positions include 9-16 (GRPNVGKS), 56-60 (DTGGV), 118-121 (NKAE), 183-190 (GRPNVGKS), 230-234 (DTAGI), and 295-298 (NKWD). The KH-like domain occupies 351 to 435 (SHLPTGELNR…PIALEFRTVK (85 aa)).

This sequence belongs to the TRAFAC class TrmE-Era-EngA-EngB-Septin-like GTPase superfamily. EngA (Der) GTPase family. Associates with the 50S ribosomal subunit.

GTPase that plays an essential role in the late steps of ribosome biogenesis. This Nitrosococcus oceani (strain ATCC 19707 / BCRC 17464 / JCM 30415 / NCIMB 11848 / C-107) protein is GTPase Der.